The sequence spans 428 residues: Spermidine/putrescine import ATP-binding protein PotA (428 aa).

The ABC transporter domain maps to 6 to 238 (IEFKNVSKTY…PINHFVADFI (233 aa)). ATP is bound at residue 40–47 (GASGSGKS).

It belongs to the ABC transporter superfamily. Spermidine/putrescine importer (TC 3.A.1.11.1) family. As to quaternary structure, the complex is composed of two ATP-binding proteins (PotA), two transmembrane proteins (PotB and PotC) and a solute-binding protein (PotD).

Its subcellular location is the cell membrane. It catalyses the reaction ATP + H2O + polyamine-[polyamine-binding protein]Side 1 = ADP + phosphate + polyamineSide 2 + [polyamine-binding protein]Side 1.. Part of the ABC transporter complex PotABCD involved in spermidine/putrescine import. Responsible for energy coupling to the transport system. This Lactococcus lactis subsp. lactis (strain IL1403) (Streptococcus lactis) protein is Spermidine/putrescine import ATP-binding protein PotA.